Here is a 457-residue protein sequence, read N- to C-terminus: UDP-glycosyltransferase 72C1 (457 aa).

Residues Ser-272, 343 to 344, 361 to 369, and 383 to 386 contribute to the UDP-alpha-D-glucose site; these read WA, HCGWNSVLE, and YSEQ.

It belongs to the UDP-glycosyltransferase family.

This Arabidopsis thaliana (Mouse-ear cress) protein is UDP-glycosyltransferase 72C1 (UGT72C1).